We begin with the raw amino-acid sequence, 425 residues long: Serine--tRNA ligase (425 aa).

230–232 (TSE) contributes to the L-serine binding site. 261 to 263 (RKE) contributes to the ATP binding site. Residue Glu284 coordinates L-serine. 348–351 (EISS) serves as a coordination point for ATP. Ser385 contacts L-serine.

It belongs to the class-II aminoacyl-tRNA synthetase family. Type-1 seryl-tRNA synthetase subfamily. As to quaternary structure, homodimer. The tRNA molecule binds across the dimer.

It is found in the cytoplasm. It carries out the reaction tRNA(Ser) + L-serine + ATP = L-seryl-tRNA(Ser) + AMP + diphosphate + H(+). The enzyme catalyses tRNA(Sec) + L-serine + ATP = L-seryl-tRNA(Sec) + AMP + diphosphate + H(+). It participates in aminoacyl-tRNA biosynthesis; selenocysteinyl-tRNA(Sec) biosynthesis; L-seryl-tRNA(Sec) from L-serine and tRNA(Sec): step 1/1. Functionally, catalyzes the attachment of serine to tRNA(Ser). Is also able to aminoacylate tRNA(Sec) with serine, to form the misacylated tRNA L-seryl-tRNA(Sec), which will be further converted into selenocysteinyl-tRNA(Sec). The chain is Serine--tRNA ligase from Wolbachia pipientis wMel.